Here is a 75-residue protein sequence, read N- to C-terminus: UPF0270 protein Avin_35000 (75 aa).

Belongs to the UPF0270 family.

This chain is UPF0270 protein Avin_35000, found in Azotobacter vinelandii (strain DJ / ATCC BAA-1303).